We begin with the raw amino-acid sequence, 593 residues long: DNA primase (593 aa).

The CHC2-type zinc finger occupies 40 to 64; that stretch reads CPFHHEKTPSFTVSQKKQFYHCFGC. Residues 260-342 enclose the Toprim domain; it reads KQLLVVEGYM…GRQLKFIFLP (83 aa). 3 residues coordinate Mg(2+): Glu266, Asp310, and Asp312.

It belongs to the DnaG primase family. In terms of assembly, monomer. Interacts with DnaB. The cofactor is Zn(2+). It depends on Mg(2+) as a cofactor.

It catalyses the reaction ssDNA + n NTP = ssDNA/pppN(pN)n-1 hybrid + (n-1) diphosphate.. Its function is as follows. RNA polymerase that catalyzes the synthesis of short RNA molecules used as primers for DNA polymerase during DNA replication. The sequence is that of DNA primase from Haemophilus influenzae (strain ATCC 51907 / DSM 11121 / KW20 / Rd).